Consider the following 498-residue polypeptide: ATP synthase subunit beta, chloroplastic (498 aa).

An ATP-binding site is contributed by 172–179 (GGAGVGKT).

This sequence belongs to the ATPase alpha/beta chains family. F-type ATPases have 2 components, CF(1) - the catalytic core - and CF(0) - the membrane proton channel. CF(1) has five subunits: alpha(3), beta(3), gamma(1), delta(1), epsilon(1). CF(0) has four main subunits: a(1), b(1), b'(1) and c(9-12).

The protein resides in the plastid. It localises to the chloroplast thylakoid membrane. The enzyme catalyses ATP + H2O + 4 H(+)(in) = ADP + phosphate + 5 H(+)(out). Its function is as follows. Produces ATP from ADP in the presence of a proton gradient across the membrane. The catalytic sites are hosted primarily by the beta subunits. The polypeptide is ATP synthase subunit beta, chloroplastic (Whiteheadia bifolia (Elephants ears)).